A 179-amino-acid polypeptide reads, in one-letter code: Large ribosomal subunit protein uL5 (179 aa).

It belongs to the universal ribosomal protein uL5 family. Part of the 50S ribosomal subunit; part of the 5S rRNA/L5/L18/L25 subcomplex. Contacts the 5S rRNA and the P site tRNA. Forms a bridge to the 30S subunit in the 70S ribosome.

In terms of biological role, this is one of the proteins that bind and probably mediate the attachment of the 5S RNA into the large ribosomal subunit, where it forms part of the central protuberance. In the 70S ribosome it contacts protein S13 of the 30S subunit (bridge B1b), connecting the 2 subunits; this bridge is implicated in subunit movement. Contacts the P site tRNA; the 5S rRNA and some of its associated proteins might help stabilize positioning of ribosome-bound tRNAs. This chain is Large ribosomal subunit protein uL5, found in Nitratidesulfovibrio vulgaris (strain ATCC 29579 / DSM 644 / CCUG 34227 / NCIMB 8303 / VKM B-1760 / Hildenborough) (Desulfovibrio vulgaris).